Here is a 956-residue protein sequence, read N- to C-terminus: Angiomotin-like protein 1 (956 aa).

Positions 197-246 (QSQFFRGQQQQQQQQGAVGHGYYMAGGTSQKSRTEGRPTVNRANSGQAHK) are disordered. Serine 241 and serine 269 each carry phosphoserine. The stretch at 259–279 (RSLSERIMQLSLERNGAKQHL) forms a coiled coil. 3 disordered regions span residues 274–322 (GAKQ…QMMS), 382–405 (PSTM…LHSV), and 411–430 (LPMA…SQQL). The span at 282–294 (SGNGKGFKVGGGP) shows a compositional bias: gly residues. Serine 295 carries the phosphoserine modification. Polar residues predominate over residues 382–398 (PSTMQQHSPMSSQTSSA). Coiled coils occupy residues 438–639 (VERA…WLER) and 665–694 (ALLE…YLEE). A Phosphoserine modification is found at serine 720. Residues 729–762 (SLEAHIWQEEEEVVQANRRCQDMEYTIKNLHAKI) are a coiled coil. Positions 773–823 (QQRSRKDAGKTDSSSLRPARSVPSIAAATGTHSRQTSLTSSQLAEEKKEEK) are disordered. Phosphoserine occurs at positions 793, 805, and 828. The segment covering 802 to 815 (GTHSRQTSLTSSQL) has biased composition (polar residues). Disordered regions lie at residues 841 to 880 (ASAP…TQTD) and 894 to 944 (PSRG…LHKP). The segment covering 852 to 866 (SALSSIASTTAASSA) has biased composition (low complexity). Serine 900 carries the phosphoserine modification. Threonine 902 bears the Phosphothreonine mark. Serine 906 bears the Phosphoserine mark. Positions 953–956 (EVLI) match the PDZ-binding motif.

It belongs to the angiomotin family. Post-translationally, polyubiquitinated by NEDD4, leading to proteasomal degradation.

It is found in the cell junction. The protein localises to the tight junction. Functionally, inhibits the Wnt/beta-catenin signaling pathway, probably by recruiting CTNNB1 to recycling endosomes and hence preventing its translocation to the nucleus. The sequence is that of Angiomotin-like protein 1 (AMOTL1) from Homo sapiens (Human).